A 253-amino-acid polypeptide reads, in one-letter code: Phosphoribosylaminoimidazole-succinocarboxamide synthase (253 aa).

The protein belongs to the SAICAR synthetase family.

The enzyme catalyses 5-amino-1-(5-phospho-D-ribosyl)imidazole-4-carboxylate + L-aspartate + ATP = (2S)-2-[5-amino-1-(5-phospho-beta-D-ribosyl)imidazole-4-carboxamido]succinate + ADP + phosphate + 2 H(+). The protein operates within purine metabolism; IMP biosynthesis via de novo pathway; 5-amino-1-(5-phospho-D-ribosyl)imidazole-4-carboxamide from 5-amino-1-(5-phospho-D-ribosyl)imidazole-4-carboxylate: step 1/2. The chain is Phosphoribosylaminoimidazole-succinocarboxamide synthase from Dinoroseobacter shibae (strain DSM 16493 / NCIMB 14021 / DFL 12).